A 417-amino-acid polypeptide reads, in one-letter code: Putative plant UBX domain-containing protein 14 (417 aa).

One can recognise a UBX domain in the interval 335 to 415; that stretch reads DRSVVCSICV…GIANSMISVT (81 aa).

The chain is Putative plant UBX domain-containing protein 14 from Arabidopsis thaliana (Mouse-ear cress).